We begin with the raw amino-acid sequence, 345 residues long: MFSSLYPLARASLFKMDAEDAHHLTLRALGAAGRTGLACALSARVPDAPRTVMGLTFRNPVGLAAGLDKDGAAIDGLAALGFGFIEVGTVTPRPQPGNPRPRMFRLPQAEALINRMGFNNHGVDQFVKNVQAARYRGILGLNIGKNADTPIERAAEDYLYCLERVYPFASYVTINISSPNTKNLRQLQGAGELDALLAALKDKQQRLADLHGKLVPLALKIAPDLDDEQVKEIGDTLLRHKIEAVIATNTTLSRAAVQGLPHADEAGGLSGRPVFDASNEVIRKLHAEVGNDVPIIGVGGIFSGEDAHAKLAAGAALVQLYTGFIYRGPALVSECVKAIARERSA.

FMN contacts are provided by residues 65–69 (AGLDK) and Thr89. Substrate is bound at residue Lys69. 114–118 (NRMGF) serves as a coordination point for substrate. 2 residues coordinate FMN: Asn142 and Asn175. Asn175 contacts substrate. The Nucleophile role is filled by Ser178. Asn180 provides a ligand contact to substrate. Residues Lys220 and Thr248 each coordinate FMN. Substrate is bound at residue 249–250 (NT). FMN is bound by residues Gly271, Gly300, and 321–322 (YT).

The protein belongs to the dihydroorotate dehydrogenase family. Type 2 subfamily. As to quaternary structure, monomer. It depends on FMN as a cofactor.

The protein resides in the cell membrane. The enzyme catalyses (S)-dihydroorotate + a quinone = orotate + a quinol. Its pathway is pyrimidine metabolism; UMP biosynthesis via de novo pathway; orotate from (S)-dihydroorotate (quinone route): step 1/1. Catalyzes the conversion of dihydroorotate to orotate with quinone as electron acceptor. The protein is Dihydroorotate dehydrogenase (quinone) of Burkholderia cenocepacia (strain HI2424).